Reading from the N-terminus, the 139-residue chain is Putative nickel-responsive regulator (139 aa).

The Ni(2+) site is built by histidine 79, histidine 90, histidine 92, and cysteine 98.

This sequence belongs to the transcriptional regulatory CopG/NikR family. Ni(2+) serves as cofactor.

Transcriptional regulator. The protein is Putative nickel-responsive regulator of Anaeromyxobacter dehalogenans (strain 2CP-C).